Reading from the N-terminus, the 293-residue chain is Shikimate dehydrogenase (NADP(+)) (293 aa).

Shikimate-binding positions include 26–28 (SKS) and threonine 73. Lysine 77 (proton acceptor) is an active-site residue. An NADP(+)-binding site is contributed by aspartate 89. Positions 98 and 113 each coordinate shikimate. NADP(+) is bound by residues 137–141 (GAGGA), 161–166 (NRTKQR), and isoleucine 231. Residue tyrosine 233 coordinates shikimate. An NADP(+)-binding site is contributed by glycine 254.

The protein belongs to the shikimate dehydrogenase family. In terms of assembly, homodimer.

The catalysed reaction is shikimate + NADP(+) = 3-dehydroshikimate + NADPH + H(+). It functions in the pathway metabolic intermediate biosynthesis; chorismate biosynthesis; chorismate from D-erythrose 4-phosphate and phosphoenolpyruvate: step 4/7. Functionally, involved in the biosynthesis of the chorismate, which leads to the biosynthesis of aromatic amino acids. Catalyzes the reversible NADPH linked reduction of 3-dehydroshikimate (DHSA) to yield shikimate (SA). In Bartonella henselae (strain ATCC 49882 / DSM 28221 / CCUG 30454 / Houston 1) (Rochalimaea henselae), this protein is Shikimate dehydrogenase (NADP(+)).